The following is a 213-amino-acid chain: Pyridoxine/pyridoxamine 5'-phosphate oxidase (213 aa).

Substrate is bound by residues 10 to 13 and Lys68; that span reads REEY. FMN contacts are provided by residues 63 to 68, 78 to 79, Lys85, and Gln107; these read RMLLLK and FT. Substrate contacts are provided by Tyr125, Arg129, and Ser133. FMN-binding positions include 142 to 143 and Trp186; that span reads QS. Residue 192 to 194 participates in substrate binding; it reads RLH. Arg196 lines the FMN pocket.

Belongs to the pyridoxamine 5'-phosphate oxidase family. In terms of assembly, homodimer. It depends on FMN as a cofactor.

It carries out the reaction pyridoxamine 5'-phosphate + O2 + H2O = pyridoxal 5'-phosphate + H2O2 + NH4(+). It catalyses the reaction pyridoxine 5'-phosphate + O2 = pyridoxal 5'-phosphate + H2O2. It participates in cofactor metabolism; pyridoxal 5'-phosphate salvage; pyridoxal 5'-phosphate from pyridoxamine 5'-phosphate: step 1/1. It functions in the pathway cofactor metabolism; pyridoxal 5'-phosphate salvage; pyridoxal 5'-phosphate from pyridoxine 5'-phosphate: step 1/1. Functionally, catalyzes the oxidation of either pyridoxine 5'-phosphate (PNP) or pyridoxamine 5'-phosphate (PMP) into pyridoxal 5'-phosphate (PLP). The protein is Pyridoxine/pyridoxamine 5'-phosphate oxidase of Nocardioides sp. (strain ATCC BAA-499 / JS614).